Reading from the N-terminus, the 315-residue chain is Acetyl-coenzyme A carboxylase carboxyl transferase subunit alpha (315 aa).

Residues 32-289 (EIDMLEASLE…KEAFTKQLSE (258 aa)) enclose the CoA carboxyltransferase C-terminal domain.

Belongs to the AccA family. As to quaternary structure, acetyl-CoA carboxylase is a heterohexamer composed of biotin carboxyl carrier protein (AccB), biotin carboxylase (AccC) and two subunits each of ACCase subunit alpha (AccA) and ACCase subunit beta (AccD).

The protein localises to the cytoplasm. The enzyme catalyses N(6)-carboxybiotinyl-L-lysyl-[protein] + acetyl-CoA = N(6)-biotinyl-L-lysyl-[protein] + malonyl-CoA. The protein operates within lipid metabolism; malonyl-CoA biosynthesis; malonyl-CoA from acetyl-CoA: step 1/1. Functionally, component of the acetyl coenzyme A carboxylase (ACC) complex. First, biotin carboxylase catalyzes the carboxylation of biotin on its carrier protein (BCCP) and then the CO(2) group is transferred by the carboxyltransferase to acetyl-CoA to form malonyl-CoA. The protein is Acetyl-coenzyme A carboxylase carboxyl transferase subunit alpha of Staphylococcus carnosus (strain TM300).